The following is a 280-amino-acid chain: uncharacterized protein (280 aa).

A signal peptide spans 1 to 26; sequence MNILIKSAVKNFIVFSTALYTSFSFA.

It to E.coli YibQ.

This is an uncharacterized protein from Haemophilus influenzae (strain ATCC 51907 / DSM 11121 / KW20 / Rd).